We begin with the raw amino-acid sequence, 370 residues long: NADH-quinone oxidoreductase subunit D 2 (370 aa).

It belongs to the complex I 49 kDa subunit family. As to quaternary structure, NDH-1 is composed of 14 different subunits. Subunits NuoB, C, D, E, F, and G constitute the peripheral sector of the complex.

It is found in the cell inner membrane. It carries out the reaction a quinone + NADH + 5 H(+)(in) = a quinol + NAD(+) + 4 H(+)(out). Its function is as follows. NDH-1 shuttles electrons from NADH, via FMN and iron-sulfur (Fe-S) centers, to quinones in the respiratory chain. The immediate electron acceptor for the enzyme in this species is believed to be ubiquinone. Couples the redox reaction to proton translocation (for every two electrons transferred, four hydrogen ions are translocated across the cytoplasmic membrane), and thus conserves the redox energy in a proton gradient. This chain is NADH-quinone oxidoreductase subunit D 2, found in Solibacter usitatus (strain Ellin6076).